The sequence spans 90 residues: Putative membrane protein insertion efficiency factor (90 aa).

The protein belongs to the UPF0161 family.

The protein localises to the cell membrane. Functionally, could be involved in insertion of integral membrane proteins into the membrane. The chain is Putative membrane protein insertion efficiency factor from Lactococcus lactis subsp. cremoris (strain MG1363).